Consider the following 156-residue polypeptide: Lipoprotein signal peptidase (156 aa).

3 consecutive transmembrane segments (helical) span residues 37 to 57, 68 to 88, and 95 to 115; these read VIPG…FGFL, FFVV…KSAE, and ILGL…RILY. Residues Asp-120 and Asp-138 contribute to the active site. Residues 133-153 traverse the membrane as a helical segment; sequence AFNVADIAICLGAFAMIVSFY.

Belongs to the peptidase A8 family.

The protein resides in the cell inner membrane. The enzyme catalyses Release of signal peptides from bacterial membrane prolipoproteins. Hydrolyzes -Xaa-Yaa-Zaa-|-(S,diacylglyceryl)Cys-, in which Xaa is hydrophobic (preferably Leu), and Yaa (Ala or Ser) and Zaa (Gly or Ala) have small, neutral side chains.. The protein operates within protein modification; lipoprotein biosynthesis (signal peptide cleavage). Functionally, this protein specifically catalyzes the removal of signal peptides from prolipoproteins. This Maridesulfovibrio salexigens (strain ATCC 14822 / DSM 2638 / NCIMB 8403 / VKM B-1763) (Desulfovibrio salexigens) protein is Lipoprotein signal peptidase.